The sequence spans 244 residues: ATP synthase subunit a, chloroplastic (244 aa).

5 helical membrane-spanning segments follow: residues 35 to 55, 92 to 112, 131 to 151, 196 to 216, and 217 to 237; these read QVLI…AIAV, VPFI…GALL, INTT…AGIT, LVVV…VMFL, and GLFT…AYIG.

It belongs to the ATPase A chain family. In terms of assembly, F-type ATPases have 2 components, CF(1) - the catalytic core - and CF(0) - the membrane proton channel. CF(1) has five subunits: alpha(3), beta(3), gamma(1), delta(1), epsilon(1). CF(0) has four main subunits: a, b, b' and c.

The protein localises to the plastid. Its subcellular location is the chloroplast thylakoid membrane. Its function is as follows. Key component of the proton channel; it plays a direct role in the translocation of protons across the membrane. This is ATP synthase subunit a, chloroplastic from Coffea arabica (Arabian coffee).